A 162-amino-acid chain; its full sequence is SsrA-binding protein (162 aa).

The segment covering His-137–Arg-154 has biased composition (basic and acidic residues). Residues His-137–Gly-162 form a disordered region.

Belongs to the SmpB family.

The protein localises to the cytoplasm. Its function is as follows. Required for rescue of stalled ribosomes mediated by trans-translation. Binds to transfer-messenger RNA (tmRNA), required for stable association of tmRNA with ribosomes. tmRNA and SmpB together mimic tRNA shape, replacing the anticodon stem-loop with SmpB. tmRNA is encoded by the ssrA gene; the 2 termini fold to resemble tRNA(Ala) and it encodes a 'tag peptide', a short internal open reading frame. During trans-translation Ala-aminoacylated tmRNA acts like a tRNA, entering the A-site of stalled ribosomes, displacing the stalled mRNA. The ribosome then switches to translate the ORF on the tmRNA; the nascent peptide is terminated with the 'tag peptide' encoded by the tmRNA and targeted for degradation. The ribosome is freed to recommence translation, which seems to be the essential function of trans-translation. The chain is SsrA-binding protein from Aeromonas salmonicida (strain A449).